The primary structure comprises 694 residues: Zinc finger BED domain-containing protein 5 (694 aa).

A BED-type zinc finger spans residues 109–165; sequence RKYDESYLSFGFTYFGNRDAPHAQCVLCKKILSNSSLAPSKLRRHLETKHAAYKDKD. The Zn(2+) site is built by C133, C136, H153, and H158.

This Canis lupus familiaris (Dog) protein is Zinc finger BED domain-containing protein 5 (ZBED5).